We begin with the raw amino-acid sequence, 735 residues long: Photosystem I P700 chlorophyll a apoprotein A2 (735 aa).

8 helical membrane passes run 46-69, 135-158, 176-200, 274-292, 329-352, 368-394, 416-438, and 521-539; these read IFASHFGQIALIFLWASGNLFYVS, LSTASMFLLILSVLFLIAGFIHGY, LNHHLSALFGVSSLAWTGHLIHVAI, IAHHHLAIAVLFIVAGHMY, LNLQLALALAAVGTICSLVAQHMY, AALYTHHQYIAGFIMCGAFAHGTIFLV, VIISHLSWVCLFLGFHTLGLYVH, and FLVHHAIALGLHTTTLILV. C563 and C572 together coordinate [4Fe-4S] cluster. The next 2 membrane-spanning stretches (helical) occupy residues 579-600 and 647-669; these read AFYLAIFWMLNTIGWVTFYWHW and LSVWSWMFLFGHLIYATGFMFLI. Chlorophyll a-binding residues include H658, M666, and Y674. Residue W675 coordinates phylloquinone. A helical transmembrane segment spans residues 708-728; it reads FVGLIHFTVGYILTYAAFLIA.

Belongs to the PsaA/PsaB family. The PsaA/B heterodimer binds the P700 chlorophyll special pair and subsequent electron acceptors. PSI consists of a core antenna complex that captures photons, and an electron transfer chain that converts photonic excitation into a charge separation. The eukaryotic PSI reaction center is composed of at least 11 subunits. P700 is a chlorophyll a/chlorophyll a' dimer, A0 is one or more chlorophyll a, A1 is one or both phylloquinones and FX is a shared 4Fe-4S iron-sulfur center. is required as a cofactor.

The protein resides in the plastid. The protein localises to the chloroplast thylakoid membrane. It carries out the reaction reduced [plastocyanin] + hnu + oxidized [2Fe-2S]-[ferredoxin] = oxidized [plastocyanin] + reduced [2Fe-2S]-[ferredoxin]. Its function is as follows. PsaA and PsaB bind P700, the primary electron donor of photosystem I (PSI), as well as the electron acceptors A0, A1 and FX. PSI is a plastocyanin/cytochrome c6-ferredoxin oxidoreductase, converting photonic excitation into a charge separation, which transfers an electron from the donor P700 chlorophyll pair to the spectroscopically characterized acceptors A0, A1, FX, FA and FB in turn. Oxidized P700 is reduced on the lumenal side of the thylakoid membrane by plastocyanin or cytochrome c6. In Bigelowiella natans (Pedinomonas minutissima), this protein is Photosystem I P700 chlorophyll a apoprotein A2.